Here is a 658-residue protein sequence, read N- to C-terminus: Scarecrow-like protein 28 (658 aa).

Disordered stretches follow at residues 43-85, 96-115, and 209-265; these read PCSS…TSGC, LATT…NNNR, and PAAV…NNNR. The segment covering 214–228 has biased composition (low complexity); it reads EASGGSSTSASSESR. The region spanning 265–654 is the GRAS domain; that stretch reads RNDLQRDFEL…QPLYTISAWT (390 aa). The leucine repeat I (LRI) stretch occupies residues 272–336; sequence FELVNLLTGC…VARMWPHIFH (65 aa). The segment at 355–420 is VHIID; it reads LRFLNQVTPI…NPPHHVRITG (66 aa). Positions 386–390 match the VHIID motif; the sequence is VHIID. Residues 430–462 form a leucine repeat II (LRII) region; the sequence is ETGDRLHGFAEAMNLQFEFHPVVDRLEDVRLWM. The tract at residues 471 to 563 is PFYRE; sequence VAVNCVMQMH…EMLFGREIRN (93 aa). The SAW stretch occupies residues 566 to 654; that stretch reads ACEGSHRQER…QPLYTISAWT (89 aa).

This sequence belongs to the GRAS family. As to quaternary structure, interacts with SNRNP35 and CYP95. In terms of tissue distribution, expressed in roots and sepals.

The protein resides in the nucleus. In terms of biological role, probable transcription factor involved in plant development. This is Scarecrow-like protein 28 (SCL28) from Arabidopsis thaliana (Mouse-ear cress).